Reading from the N-terminus, the 24-residue chain is Skin secreted peptide 1 (24 aa).

In terms of tissue distribution, expressed by the skin glands.

It localises to the secreted. In Ascaphus truei (Coastal tailed frog), this protein is Skin secreted peptide 1.